Here is an 83-residue protein sequence, read N- to C-terminus: MSGRTGERPFGDIVTSIRYWIIHTITVPMLFLAGWLFVSTGLAYDVFGTPRPNEYFDQARQGLPLVTDRYEGKQQIDEFTKGL.

A helical membrane pass occupies residues 21–35 (IIHTITVPMLFLAGW). His-23 contacts heme.

This sequence belongs to the PsbE/PsbF family. In terms of assembly, heterodimer of an alpha subunit and a beta subunit. PSII is composed of 1 copy each of membrane proteins PsbA, PsbB, PsbC, PsbD, PsbE, PsbF, PsbH, PsbI, PsbJ, PsbK, PsbL, PsbM, PsbT, PsbX, PsbY, PsbZ, Psb30/Ycf12, peripheral proteins PsbO, CyanoQ (PsbQ), PsbU, PsbV and a large number of cofactors. It forms dimeric complexes. It depends on heme b as a cofactor.

The protein localises to the cellular thylakoid membrane. In terms of biological role, this b-type cytochrome is tightly associated with the reaction center of photosystem II (PSII). PSII is a light-driven water:plastoquinone oxidoreductase that uses light energy to abstract electrons from H(2)O, generating O(2) and a proton gradient subsequently used for ATP formation. It consists of a core antenna complex that captures photons, and an electron transfer chain that converts photonic excitation into a charge separation. This is Cytochrome b559 subunit alpha from Acaryochloris marina (strain MBIC 11017).